The chain runs to 148 residues: MKTVEIYTDGACKKNPGPGGWGAILIYGKNEKEIYGGELDTTNNRMELMAAIEALRALKQGCKVELYTDSQYVRKGITEWMQNWIKKGWRTSGGDPVKNVDLWQALDKERNKHDISWRWVKGHSGHPLNERADELANLGVKEALGETG.

One can recognise an RNase H type-1 domain in the interval 1-141 (MKTVEIYTDG…ADELANLGVK (141 aa)). Residues Asp9, Glu47, Asp69, and Asp133 each coordinate Mg(2+).

The protein belongs to the RNase H family. Monomer. Mg(2+) serves as cofactor.

The protein localises to the cytoplasm. It carries out the reaction Endonucleolytic cleavage to 5'-phosphomonoester.. Its function is as follows. Endonuclease that specifically degrades the RNA of RNA-DNA hybrids. The polypeptide is Ribonuclease H (Hahella chejuensis (strain KCTC 2396)).